The primary structure comprises 329 residues: DNA-directed RNA polymerase subunit alpha (329 aa).

The interval 1-234 (MQGSVTEFLK…EQLDAFVELR (234 aa)) is alpha N-terminal domain (alpha-NTD). The tract at residues 248–329 (FDPILLRPVD…WPPASLADDL (82 aa)) is alpha C-terminal domain (alpha-CTD).

The protein belongs to the RNA polymerase alpha chain family. As to quaternary structure, homodimer. The RNAP catalytic core consists of 2 alpha, 1 beta, 1 beta' and 1 omega subunit. When a sigma factor is associated with the core the holoenzyme is formed, which can initiate transcription.

It carries out the reaction RNA(n) + a ribonucleoside 5'-triphosphate = RNA(n+1) + diphosphate. DNA-dependent RNA polymerase catalyzes the transcription of DNA into RNA using the four ribonucleoside triphosphates as substrates. This is DNA-directed RNA polymerase subunit alpha from Shewanella loihica (strain ATCC BAA-1088 / PV-4).